A 733-amino-acid polypeptide reads, in one-letter code: 1,4-alpha-glucan branching enzyme GlgB (733 aa).

The Nucleophile role is filled by D409. Residue E462 is the Proton donor of the active site.

It belongs to the glycosyl hydrolase 13 family. GlgB subfamily. In terms of assembly, monomer.

It catalyses the reaction Transfers a segment of a (1-&gt;4)-alpha-D-glucan chain to a primary hydroxy group in a similar glucan chain.. It functions in the pathway glycan biosynthesis; glycogen biosynthesis. Functionally, catalyzes the formation of the alpha-1,6-glucosidic linkages in glycogen by scission of a 1,4-alpha-linked oligosaccharide from growing alpha-1,4-glucan chains and the subsequent attachment of the oligosaccharide to the alpha-1,6 position. In Gloeobacter violaceus (strain ATCC 29082 / PCC 7421), this protein is 1,4-alpha-glucan branching enzyme GlgB.